A 560-amino-acid chain; its full sequence is Proline--tRNA ligase (560 aa).

It belongs to the class-II aminoacyl-tRNA synthetase family. ProS type 1 subfamily. Homodimer.

The protein resides in the cytoplasm. It catalyses the reaction tRNA(Pro) + L-proline + ATP = L-prolyl-tRNA(Pro) + AMP + diphosphate. Its function is as follows. Catalyzes the attachment of proline to tRNA(Pro) in a two-step reaction: proline is first activated by ATP to form Pro-AMP and then transferred to the acceptor end of tRNA(Pro). As ProRS can inadvertently accommodate and process non-cognate amino acids such as alanine and cysteine, to avoid such errors it has two additional distinct editing activities against alanine. One activity is designated as 'pretransfer' editing and involves the tRNA(Pro)-independent hydrolysis of activated Ala-AMP. The other activity is designated 'posttransfer' editing and involves deacylation of mischarged Ala-tRNA(Pro). The misacylated Cys-tRNA(Pro) is not edited by ProRS. The sequence is that of Proline--tRNA ligase from Vesicomyosocius okutanii subsp. Calyptogena okutanii (strain HA).